We begin with the raw amino-acid sequence, 956 residues long: Pyruvate, phosphate dikinase, chloroplastic (956 aa).

The transit peptide at 1-79 directs the protein to the chloroplast; sequence MMSSLFVEGM…AVLNPVSPPV (79 aa). Thr-536 bears the Phosphothreonine; by PDRP1 mark. The Tele-phosphohistidine intermediate role is filled by His-538. Positions 644, 701, 830, 851, 852, 853, and 854 each coordinate substrate. A Mg(2+)-binding site is contributed by Glu-830. Asp-854 provides a ligand contact to Mg(2+). The active-site Proton donor is Cys-916.

It belongs to the PEP-utilizing enzyme family. As to quaternary structure, homotetramer. The cofactor is Mg(2+). Post-translationally, phosphorylation of Thr-536 in the dark inactivates the enzyme. Dephosphorylation upon light stimulation reactivates the enzyme.

It is found in the plastid. The protein localises to the chloroplast. It carries out the reaction pyruvate + phosphate + ATP = phosphoenolpyruvate + AMP + diphosphate + H(+). Activated by light-induced dephosphorylation. Inhibited by dark-induced phosphorylation. Both reactions are catalyzed by PDRP1. Functionally, formation of phosphoenolpyruvate. In Flaveria pringlei, this protein is Pyruvate, phosphate dikinase, chloroplastic (PPDK).